The sequence spans 1872 residues: MFSRRSHGDVKKSTQKVLDPKKDVLTRLKHLRALLDNVDASDLKQFFETNYSQIYFIFYENFITLENSLKLKGNNKSQREELDSILFLFEKILQFLPERIFFRWHYQSIGSTLKKLLHTGNSIKIRCEGIRLFLLWLQALQTNCAEEQVLIFACLVPGFPAVLSSRGPCTLETLINPSPSIVDAKIYPEEITPLLPAISGEKIAEDQTCFFLQILLKYMVIQAASLEWKNKENQDTGFKFLFTLFRKYYLPHLFPSFTKLTNIYKPVLEIPHLRPKPVYVTVTRDNETIYSTKIPYMAARVVFIKWIVTFFLEKKYLTATQNTKNGVDVLPKIIQTVGGGAIQEKVPELDGAGSTEQDKSHSNSSTLSDRRLSNSSLCSIEEEHRTVYEMVQRILLSTRGYVNFVNEVFRQAFLLPSCEISVTRKVVQVYRKWILQNKPVFMEEPDKKDVAQEDADKLGLSETDSKEASSESSGHKRSSSWGRTYSFTSAMSRGCVTEEDNTNVKAGAQAMLQVFLTNAANVFLLEPCAEVPMLLREQVDASKAVLIIFRRMIMELTMNQKTWEQMLQILLRITEAVMQKPKDKHVKDLFAQSLAGLLFRTLIVAWIRANLCVYISRELWDDFLRVLSSLTEWEELITEWSNIMDSLTAVLARTVYGVEMTNLPLDKLSEQKEKKQRGKGCILEPQKGTAVGRSFSLSWRSHPDVTEPMRFRSATTSGAPGVEKARNTVRQKATEVEEFQQAESTAAADCDYLVVGQQQVPRSSSTSDITERLYSDSSQGQKVEHSQNLSSSEPKSVQESKGHVTHEHEGITMLVRRSSSPAELELKDDLQQAHGRCRQRQTSESTGSDTVVGYSNEAELPVSPWQACEEDPDLSTPTDAVADSDARHWLQLSPTDASNLTDSRECLADDCSIIAGGNLTGWHPDSAAVLWRRVLGILGDVNNIQSPKIHAKVFGYLYELWYKLAKIRDNLAISLDNQSSPSPPLLIPPLRMFASWLFKATTLPNEYKEGKLQAYKLICAMMTRRQDVLPNSDFLVHFYLVMHLGLTSEDQDVLNTIIKNCSPRFFSLGLPGFSMLVGDFITAAARVLSTDMLAAPRSEALTLLGSLVCFPNTYQEIPLLQSVPEVSDVVTGAEDVKHYLINILLKNATEEPNECARCIAICSLGVWICEELAQSASHPQVKDAINVIGVTLKFPNKIVAQVACDVLQLLVSYWEKLQMFETALPRKMAEILVATIAFLLPSAEYSSVETDKKFIVSLLLCLLDWCMALPVSALLHPVSTAVLEELHPSRAPLLDYIYRVLHCCVCGSSTYTQQSHYTLTLADLSSTDYDPFLPLANVRNSEPIQYHSSADLGNLLTVEEEKKRRSVELIPLTARMVMAHLVNHLGHYPLSGGPAVLHSLVSENHDNAHVEGTELSSEVFRSPNLQLFVFNDSTLISYLQTPAEGPAGGTSGGSLSDVRVIVRDISGKYSWDGKVLYGPLEGRLAPNGRNPSFQISGWHHHTCGPQKDLFNGEEGDDVLDKLLENIGHTSPECLLPSQLNLNEPSPTPCAMNWDQEKAIMEVILRQSAQEDEYVQRCNSDSSVTVTSQGQPSPVEPRGPFYFCRLLLDDLGMNSWDRRKNFHLLKKNSKLLRELKNLDSRQCRETHKIAVFYIAEGQEDKCSILANERGSQAYEDFVAGLGWEVDLSTHCGFMGGLQRNGSTGQTAPYYATSTVEVIFHVSTRMPSDSDDSLTKKLRHLGNDEVHIVWSEHSRDYRRGIIPTAFGDVSIIIYPMKNHMFFITITKKPEVPFFGPLFDGAIVSGKLLPSLICATCINASRAVKCLIPLYQSFYEERALYLEAIIQNHREVMTFEDFAAQVFSPSPSYSVSGTD.

A disordered region spans residues 350-370 (DGAGSTEQDKSHSNSSTLSDR). Phosphoserine occurs at positions 373, 376, and 379. Positions 445–469 (PDKKDVAQEDADKLGLSETDSKEAS) are enriched in basic and acidic residues. Residues 445–481 (PDKKDVAQEDADKLGLSETDSKEASSESSGHKRSSSW) are disordered. Ser-486 is modified (phosphoserine). Ser-696 carries the phosphoserine; by PKB modification. Disordered stretches follow at residues 711-730 (FRSA…NTVR) and 758-813 (QQVP…GITM). Thr-715 is modified (phosphothreonine; by PKB). Composition is skewed to polar residues over residues 758–768 (QQVPRSSSTSD) and 775–795 (SDSS…SEPK). Over residues 796-810 (SVQESKGHVTHEHEG) the composition is skewed to basic and acidic residues. 2 positions are modified to phosphoserine: Ser-819 and Ser-820. The disordered stretch occupies residues 831 to 851 (QQAHGRCRQRQTSESTGSDTV). Residues 840–849 (RQTSESTGSD) are compositionally biased toward polar residues. At Ser-1592 the chain carries Phosphoserine. One can recognise a Rap-GAP domain in the interval 1634–1842 (LKNLDSRQCR…EERALYLEAI (209 aa)).

Component of the heterodimeric RalGAP2 complex with RALGAPB. Heterodimerization is required for activity. In terms of tissue distribution, abundantly expressed in testis, pancreas, lung, thymus, brown fat, and white fat.

It is found in the cytoplasm. Catalytic subunit of the heterodimeric RalGAP2 complex which acts as a GTPase activator for the Ras-like small GTPases RALA and RALB. This chain is Ral GTPase-activating protein subunit alpha-2 (Ralgapa2), found in Mus musculus (Mouse).